The primary structure comprises 340 residues: UPF0324 membrane protein OB3406 (340 aa).

9 consecutive transmembrane segments (helical) span residues 12–31 (SFYT…GVLC), 36–58 (LDIM…TIGL), 94–116 (GLHA…YSLA), 126–148 (SILT…APLV), 155–177 (TAVS…TMMY), 215–237 (IAIV…IGIY), 257–276 (IPWF…IGFL), 281–303 (VNLL…GLNV), and 315–337 (VFFA…IYVM).

The protein belongs to the UPF0324 family.

It is found in the cell membrane. The polypeptide is UPF0324 membrane protein OB3406 (Oceanobacillus iheyensis (strain DSM 14371 / CIP 107618 / JCM 11309 / KCTC 3954 / HTE831)).